Reading from the N-terminus, the 202-residue chain is N-(5'-phosphoribosyl)anthranilate isomerase (202 aa).

This sequence belongs to the TrpF family.

The catalysed reaction is N-(5-phospho-beta-D-ribosyl)anthranilate = 1-(2-carboxyphenylamino)-1-deoxy-D-ribulose 5-phosphate. Its pathway is amino-acid biosynthesis; L-tryptophan biosynthesis; L-tryptophan from chorismate: step 3/5. This chain is N-(5'-phosphoribosyl)anthranilate isomerase, found in Geobacter metallireducens (strain ATCC 53774 / DSM 7210 / GS-15).